The following is a 571-amino-acid chain: Urease subunit alpha (571 aa).

A Urease domain is found at 132–571 (GAIDTHIHFI…LPMGQKYFLF (440 aa)). Ni(2+) contacts are provided by His137, His139, and Lys220. Position 220 is an N6-carboxylysine (Lys220). His222 lines the substrate pocket. Ni(2+)-binding residues include His249 and His275. His323 serves as the catalytic Proton donor. Residue Asp363 participates in Ni(2+) binding.

It belongs to the metallo-dependent hydrolases superfamily. Urease alpha subunit family. In terms of assembly, heterotrimer of UreA (gamma), UreB (beta) and UreC (alpha) subunits. Three heterotrimers associate to form the active enzyme. Ni cation serves as cofactor. In terms of processing, carboxylation allows a single lysine to coordinate two nickel ions.

Its subcellular location is the cytoplasm. It catalyses the reaction urea + 2 H2O + H(+) = hydrogencarbonate + 2 NH4(+). Its pathway is nitrogen metabolism; urea degradation; CO(2) and NH(3) from urea (urease route): step 1/1. This chain is Urease subunit alpha, found in Corynebacterium urealyticum (strain ATCC 43042 / DSM 7109).